A 553-amino-acid polypeptide reads, in one-letter code: uncharacterized protein (553 aa).

The signal sequence occupies residues 1–31; it reads MEDIMTSLLVATSRVVVTISLAYVPVKSAFA. Residue Ser207 is the Acyl-ester intermediate of the active site. Cys275 and Cys292 are joined by a disulfide. 5 residues coordinate Ca(2+): Asp276, Asp279, Val281, Asp283, and Leu285. Residues Asp444 and His482 each act as charge relay system in the active site. Cys528 and Cys550 are disulfide-bonded.

This sequence belongs to the tannase family.

This is an uncharacterized protein from Agrobacterium fabrum (strain C58 / ATCC 33970) (Agrobacterium tumefaciens (strain C58)).